The chain runs to 1770 residues: Transposon Ty2-OR2 Gag-Pol polyprotein (1770 aa).

Disordered stretches follow at residues 1 to 88 and 359 to 449; these read MESQ…YQQH and QHSE…SNDE. Composition is skewed to polar residues over residues 19–39 and 49–60; these read ASVT…SASN and KVNSQEETTPGT. Residues 295-397 form an RNA-binding region; it reads ENNINVSDRL…SSKPRAAKAH (103 aa). Residues 369–381 show a composition bias toward low complexity; the sequence is TSPNTTNTKVTTR. 2 stretches are compositionally biased toward polar residues: residues 399-408 and 415-435; these read IATSSKFSRV and ESTV…GQQQ. The active-site For protease activity; shared with dimeric partner is D457. The interval 579–636 is integrase-type zinc finger-like; sequence NVNKSKSVNKYPYPLIHRMLGHANFRSIQKSLKKNAVTYLKESDIEWSNASTYQCPDC. The Integrase catalytic domain maps to 656 to 831; that stretch reads ESYEPFQYLH…AGLDITTILP (176 aa). D667 and D732 together coordinate Mg(2+). Disordered regions lie at residues 1005–1038, 1057–1135, 1146–1165, and 1170–1205; these read GGTI…MIDL, GGTE…KSSK, LPLP…VSKD, and HSRQ…TEIE. 2 stretches are compositionally biased toward polar residues: residues 1009–1024 and 1065–1082; these read ESDT…FTAR and QRNS…STPS. Residues 1151 to 1165 are compositionally biased toward basic and acidic residues; it reads LTHKSPTDTSDVSKD. The short motif at 1193–1227 is the Bipartite nuclear localization signal element; the sequence is KKRSLEDNETEIEVSRDTWNNKNMRSLEPPRSKKR. The Reverse transcriptase Ty1/copia-type domain maps to 1353-1491; sequence NDYYITQLDI…DILGLEIKYQ (139 aa). 6 residues coordinate Mg(2+): D1361, D1442, D1443, D1625, E1667, and D1700. One can recognise an RNase H Ty1/copia-type domain in the interval 1625–1767; sequence DASYGNQPYY…IKTFKLLTNK (143 aa).

In terms of assembly, the capsid protein forms a homotrimer, from which the VLPs are assembled. The protease is a homodimer, whose active site consists of two apposed aspartic acid residues. Initially, virus-like particles (VLPs) are composed of the structural unprocessed proteins Gag and Gag-Pol, and also contain the host initiator methionine tRNA (tRNA(i)-Met) which serves as a primer for minus-strand DNA synthesis, and a dimer of genomic Ty RNA. Processing of the polyproteins occurs within the particle and proceeds by an ordered pathway, called maturation. First, the protease (PR) is released by autocatalytic cleavage of the Gag-Pol polyprotein, and this cleavage is a prerequisite for subsequent processing at the remaining sites to release the mature structural and catalytic proteins. Maturation takes place prior to the RT reaction and is required to produce transposition-competent VLPs.

The protein resides in the cytoplasm. Its subcellular location is the nucleus. It catalyses the reaction DNA(n) + a 2'-deoxyribonucleoside 5'-triphosphate = DNA(n+1) + diphosphate. The catalysed reaction is Endonucleolytic cleavage to 5'-phosphomonoester.. In terms of biological role, capsid protein (CA) is the structural component of the virus-like particle (VLP), forming the shell that encapsulates the retrotransposons dimeric RNA genome. The particles are assembled from trimer-clustered units and there are holes in the capsid shells that allow for the diffusion of macromolecules. CA also has nucleocapsid-like chaperone activity, promoting primer tRNA(i)-Met annealing to the multipartite primer-binding site (PBS), dimerization of Ty2 RNA and initiation of reverse transcription. Its function is as follows. The aspartyl protease (PR) mediates the proteolytic cleavages of the Gag and Gag-Pol polyproteins after assembly of the VLP. Functionally, reverse transcriptase/ribonuclease H (RT) is a multifunctional enzyme that catalyzes the conversion of the retro-elements RNA genome into dsDNA within the VLP. The enzyme displays a DNA polymerase activity that can copy either DNA or RNA templates, and a ribonuclease H (RNase H) activity that cleaves the RNA strand of RNA-DNA heteroduplexes during plus-strand synthesis and hydrolyzes RNA primers. The conversion leads to a linear dsDNA copy of the retrotransposon that includes long terminal repeats (LTRs) at both ends. Integrase (IN) targets the VLP to the nucleus, where a subparticle preintegration complex (PIC) containing at least integrase and the newly synthesized dsDNA copy of the retrotransposon must transit the nuclear membrane. Once in the nucleus, integrase performs the integration of the dsDNA into the host genome. The polypeptide is Transposon Ty2-OR2 Gag-Pol polyprotein (TY2B-OR2) (Saccharomyces cerevisiae (strain ATCC 204508 / S288c) (Baker's yeast)).